A 428-amino-acid chain; its full sequence is BTB/POZ domain-containing protein KCTD16 (428 aa).

The 74-residue stretch at glutamate 25–aspartate 98 folds into the BTB domain. At tyrosine 112 the chain carries Phosphotyrosine. 4 positions are modified to phosphoserine: serine 130, serine 137, serine 143, and serine 146.

Homopentamer; forms an open pentamer. In contrast to other BTB domain-containing proteins, does not interact with CUL3. Interacts as a tetramer with GABRB1 and GABRB2.

Its subcellular location is the presynaptic cell membrane. The protein localises to the postsynaptic cell membrane. In terms of biological role, auxiliary subunit of GABA-B receptors that determine the pharmacology and kinetics of the receptor response. Increases agonist potency and markedly alter the G-protein signaling of the receptors by accelerating onset and promoting desensitization. The protein is BTB/POZ domain-containing protein KCTD16 (KCTD16) of Homo sapiens (Human).